A 108-amino-acid chain; its full sequence is Urease subunit beta (108 aa).

Belongs to the urease beta subunit family. As to quaternary structure, heterotrimer of UreA (gamma), UreB (beta) and UreC (alpha) subunits. Three heterotrimers associate to form the active enzyme.

It is found in the cytoplasm. The catalysed reaction is urea + 2 H2O + H(+) = hydrogencarbonate + 2 NH4(+). The protein operates within nitrogen metabolism; urea degradation; CO(2) and NH(3) from urea (urease route): step 1/1. This Chromohalobacter salexigens (strain ATCC BAA-138 / DSM 3043 / CIP 106854 / NCIMB 13768 / 1H11) protein is Urease subunit beta.